A 369-amino-acid polypeptide reads, in one-letter code: Naringenin,2-oxoglutarate 3-dioxygenase (369 aa).

The Fe2OG dioxygenase domain maps to 193–297 (CVDMDQKVVV…RLSIATFQNP (105 aa)). Positions 220, 222, and 278 each coordinate Fe cation. Residue Arg288 coordinates 2-oxoglutarate.

Belongs to the iron/ascorbate-dependent oxidoreductase family. Fe(2+) is required as a cofactor. It depends on L-ascorbate as a cofactor.

The catalysed reaction is a (2S)-flavan-4-one + 2-oxoglutarate + O2 = a (2R,3R)-dihydroflavonol + succinate + CO2. The protein operates within secondary metabolite biosynthesis; flavonoid biosynthesis. Functionally, catalyzes the 3-beta-hydroxylation of 2S-flavanones to 2R,3R-dihydroflavonols which are intermediates in the biosynthesis of flavonols, anthocyanidins, catechins and proanthocyanidins in plants. In Petunia hybrida (Petunia), this protein is Naringenin,2-oxoglutarate 3-dioxygenase (AN3).